The following is a 320-amino-acid chain: Cyclin-D6-1 (320 aa).

The interval 279-320 is disordered; the sequence is HHRSASSESERTTTVGSAANSADAKRRCMGPPRQWGVGGPDE.

The protein belongs to the cyclin family. Cyclin D subfamily.

This Oryza sativa subsp. japonica (Rice) protein is Cyclin-D6-1 (CYCD6-1).